A 317-amino-acid chain; its full sequence is ADP-L-glycero-D-manno-heptose-6-epimerase (317 aa).

NADP(+) contacts are provided by residues 10–11, 31–32, Lys-38, Lys-53, 75–79, and Asn-92; these read FI, DD, and QGACS. The active-site Proton acceptor is Tyr-139. Residue Lys-143 participates in NADP(+) binding. Substrate is bound at residue Asn-166. 2 residues coordinate NADP(+): Val-167 and Lys-175. Lys-175 serves as the catalytic Proton acceptor. Substrate-binding positions include Gly-177, His-184, 198-201, Arg-211, and Tyr-275; that span reads FQGH.

The protein belongs to the NAD(P)-dependent epimerase/dehydratase family. HldD subfamily. Homopentamer. It depends on NADP(+) as a cofactor.

The catalysed reaction is ADP-D-glycero-beta-D-manno-heptose = ADP-L-glycero-beta-D-manno-heptose. Its pathway is nucleotide-sugar biosynthesis; ADP-L-glycero-beta-D-manno-heptose biosynthesis; ADP-L-glycero-beta-D-manno-heptose from D-glycero-beta-D-manno-heptose 7-phosphate: step 4/4. Functionally, catalyzes the interconversion between ADP-D-glycero-beta-D-manno-heptose and ADP-L-glycero-beta-D-manno-heptose via an epimerization at carbon 6 of the heptose. The polypeptide is ADP-L-glycero-D-manno-heptose-6-epimerase (Shewanella loihica (strain ATCC BAA-1088 / PV-4)).